We begin with the raw amino-acid sequence, 350 residues long: Induced myeloid leukemia cell differentiation protein Mcl-1 (350 aa).

Glycyl lysine isopeptide (Lys-Gly) (interchain with G-Cter in ubiquitin) cross-links involve residues Lys-5 and Lys-40. Positions 47 to 87 are disordered; the sequence is EIGGGEAGAVIGGSAGASPPSTLTPDSRRVARPPPIGAEVP. Residues 50-61 show a composition bias toward gly residues; that stretch reads GGEAGAVIGGSA. A PEST-like region spans residues 104–175; sequence RAAPLEEMEA…PAEEEEDELY (72 aa). Ser-121 is subject to Phosphoserine. A Glycyl lysine isopeptide (Lys-Gly) (interchain with G-Cter in ubiquitin) cross-link involves residue Lys-136. The segment at 148 to 171 is disordered; it reads GESGNNTSTDGSLPSTPPPAEEEE. Polar residues predominate over residues 150 to 161; sequence SGNNTSTDGSLP. Ser-159 bears the Phosphoserine; by GSK3-alpha and GSK3-beta mark. At Ser-162 the chain carries Phosphoserine. Thr-163 is subject to Phosphothreonine; by MAPK. Residues Lys-194 and Lys-197 each participate in a glycyl lysine isopeptide (Lys-Gly) (interchain with G-Cter in ubiquitin) cross-link. A BH3 motif is present at residues 209–223; sequence ALETLRRVGDGVQRN. A BH1 motif is present at residues 252–272; it reads HVFSDGVTNWGRIVTLISFGA. The BH2 motif lies at 304–319; that stretch reads DWLVKQRGWDGFVEFF. A helical membrane pass occupies residues 328 to 348; the sequence is IRNVLLAFAGVAGVGAGLAYL.

This sequence belongs to the Bcl-2 family. In terms of assembly, interacts with HIF3A (via C-terminus domain). Interacts with BAD, BOK, BIK and BMF. Interacts with PMAIP1. Interacts with BBC3. Isoform 1 interacts with BAX, BAK1 and TPT1. Heterodimer of isoform 1 and isoform 2. Homodimers of isoform 1 or isoform 2 are not detected. Isoform 2 does not interact with pro-apoptotic BCL2-related proteins. Interacts with RTL10/BOP. Interacts with BCL2L11; may sequester BCL2L11 to prevent its pro-apoptotic activity. Interacts with GIMAP5 and HSPA8/HSC70; the interaction between HSPA8 and MCL1 is impaired in the absence of GIMAP5. Post-translationally, cleaved by CASP3 during apoptosis. In intact cells cleavage occurs preferentially after Asp-127, yielding a pro-apoptotic 28 kDa C-terminal fragment. Rapidly degraded in the absence of phosphorylation on Thr-163 in the PEST region. In terms of processing, phosphorylated on Ser-159, by GSK3, in response to IL3/interleukin-3 withdrawal. Phosphorylation at Ser-159 induces ubiquitination and proteasomal degradation, abrogating the anti-apoptotic activity. Treatment with taxol or okadaic acid induces phosphorylation on additional sites. Post-translationally, ubiquitinated. Ubiquitination is induced by phosphorylation at Ser-159. Deubiquitinated by USP20; leading to increased stability.

The protein resides in the membrane. The protein localises to the cytoplasm. It is found in the mitochondrion. It localises to the nucleus. Its subcellular location is the nucleoplasm. Its function is as follows. Involved in the regulation of apoptosis versus cell survival, and in the maintenance of viability but not of proliferation. Mediates its effects by interactions with a number of other regulators of apoptosis. Isoform 1 inhibits apoptosis. Isoform 2 promotes apoptosis. The protein is Induced myeloid leukemia cell differentiation protein Mcl-1 (MCL1) of Homo sapiens (Human).